The sequence spans 500 residues: Guanosine-5'-triphosphate,3'-diphosphate pyrophosphatase (500 aa).

The protein belongs to the GppA/Ppx family. GppA subfamily.

It catalyses the reaction guanosine 3'-diphosphate 5'-triphosphate + H2O = guanosine 3',5'-bis(diphosphate) + phosphate + H(+). The protein operates within purine metabolism; ppGpp biosynthesis; ppGpp from GTP: step 2/2. Catalyzes the conversion of pppGpp to ppGpp. Guanosine pentaphosphate (pppGpp) is a cytoplasmic signaling molecule which together with ppGpp controls the 'stringent response', an adaptive process that allows bacteria to respond to amino acid starvation, resulting in the coordinated regulation of numerous cellular activities. This chain is Guanosine-5'-triphosphate,3'-diphosphate pyrophosphatase, found in Photorhabdus laumondii subsp. laumondii (strain DSM 15139 / CIP 105565 / TT01) (Photorhabdus luminescens subsp. laumondii).